We begin with the raw amino-acid sequence, 122 residues long: Large ribosomal subunit protein uL14 (122 aa).

Belongs to the universal ribosomal protein uL14 family. In terms of assembly, part of the 50S ribosomal subunit. Forms a cluster with proteins L3 and L19. In the 70S ribosome, L14 and L19 interact and together make contacts with the 16S rRNA in bridges B5 and B8.

Binds to 23S rRNA. Forms part of two intersubunit bridges in the 70S ribosome. This is Large ribosomal subunit protein uL14 from Rhodospirillum centenum (strain ATCC 51521 / SW).